Here is an 803-residue protein sequence, read N- to C-terminus: MTVSFENKDFNQFINSSKFLVEYDVTSALEQEGLKQSDYAEICRRLNRAPNRNELGMFGVMWSEHCCYRNSRPLLKNFPTTGSRILVGPGENAGVVDIGFGQRLVFKIESHNHPSAVEPFQGAATGVGGILRDIFTMGARPIALLNALRFGPLDDEKNISLLEGVVAGISHYGNCVGVPTIGGEVGFDSSYSGNPLVNAMALGLMETEEIVCSGASGIGFPVLYVGNTTGRDGMGGASFASSELSKTSIDDRPAVQVGDPFLEKGLIEACLEAFKTGYVIAAQDMGAAGLTCSCSEMASKGEVGIELNLDLVPAREKGMTAYEFLLSESQERMLFVVKPGSEEELRELFIRWGLYVEVVGKVLKEKVVRVIHKGEVVANLPASALADDTPIEEHLLINSTPEYLQEHWKWTEDLLPKTLDDGIINIKNNLFISWNNVLLELLSIPSIASKNWIYKQYDFQVQSNTVVSPGEADAAVIRIRSQNDFSTKPKKDRGIASVVDCNDRWVYLDPQRGSMSAVAEAARNLSAVGAEPIAITNNLNFSSPDKAVGFWQLSMSCEGITKACLALNTPVTGGNVSLYNDTKLPNNTVIPIHPTPVIGMVGLIEDINKICKKSWVKAEDQIWMIGLPLENNINQDERISLSASSFLEYIHGLKTGRPPEIDLNLEKQVHAFLREVIKQGIVNSAHDLGDGGLTVAIADCCISSGYGANIILPPSQSRLDRLLFAEGGARVLVSCSTDQSVELKKYYKNISLQGSILFSISHLGNVNNQKKLLVSQSNNTIIDVNILDLKDTYKDAIHKKITK.

Histidine 65 is an active-site residue. Positions 68 and 107 each coordinate ATP. Mg(2+) is bound at residue glutamate 109. Substrate contacts are provided by residues 110 to 113 and arginine 132; that span reads SHNH. Catalysis depends on histidine 111, which acts as the Proton acceptor. Aspartate 133 is a Mg(2+) binding site. Glutamine 256 contacts substrate. Position 284 (aspartate 284) interacts with Mg(2+). Residue 328–330 participates in substrate binding; it reads ESQ. 2 residues coordinate ATP: asparagine 537 and glycine 574. Asparagine 575 is a binding site for Mg(2+). Serine 577 provides a ligand contact to substrate.

It belongs to the FGAMS family. As to quaternary structure, monomer. Part of the FGAM synthase complex composed of 1 PurL, 1 PurQ and 2 PurS subunits.

It localises to the cytoplasm. The enzyme catalyses N(2)-formyl-N(1)-(5-phospho-beta-D-ribosyl)glycinamide + L-glutamine + ATP + H2O = 2-formamido-N(1)-(5-O-phospho-beta-D-ribosyl)acetamidine + L-glutamate + ADP + phosphate + H(+). Its pathway is purine metabolism; IMP biosynthesis via de novo pathway; 5-amino-1-(5-phospho-D-ribosyl)imidazole from N(2)-formyl-N(1)-(5-phospho-D-ribosyl)glycinamide: step 1/2. Part of the phosphoribosylformylglycinamidine synthase complex involved in the purines biosynthetic pathway. Catalyzes the ATP-dependent conversion of formylglycinamide ribonucleotide (FGAR) and glutamine to yield formylglycinamidine ribonucleotide (FGAM) and glutamate. The FGAM synthase complex is composed of three subunits. PurQ produces an ammonia molecule by converting glutamine to glutamate. PurL transfers the ammonia molecule to FGAR to form FGAM in an ATP-dependent manner. PurS interacts with PurQ and PurL and is thought to assist in the transfer of the ammonia molecule from PurQ to PurL. The chain is Phosphoribosylformylglycinamidine synthase subunit PurL from Prochlorococcus marinus (strain NATL2A).